A 72-amino-acid polypeptide reads, in one-letter code: MMFITSNINGRLIFVHDLVIFQKIKHFLNFCVVYFSQRASCCMDYAIFVFNLCFIPNLCVACIFNVATASIP.

Residues 46 to 66 (AIFVFNLCFIPNLCVACIFNV) form a helical membrane-spanning segment.

It localises to the membrane. This is an uncharacterized protein from Saccharomyces cerevisiae (strain ATCC 204508 / S288c) (Baker's yeast).